The primary structure comprises 85 residues: Large ribosomal subunit protein bL27 (85 aa).

The tract at residues 1-21 is disordered; sequence MAHKKGQGSTQNNRDSAGRRL.

The protein belongs to the bacterial ribosomal protein bL27 family.

This chain is Large ribosomal subunit protein bL27, found in Nitratiruptor sp. (strain SB155-2).